Here is a 346-residue protein sequence, read N- to C-terminus: Cell division protein ZipA (346 aa).

The Periplasmic portion of the chain corresponds to 1-6 (MEDLQL). Residues 7-27 (VLFVLGAIAIVAVLVHGFWSI) traverse the membrane as a helical segment. The Cytoplasmic segment spans residues 28 to 346 (RRQQPKSLKD…DYLHRIRANA (319 aa)). 2 disordered regions span residues 76-103 (ANEA…QPVE) and 121-145 (QPDF…RQEP).

The protein belongs to the ZipA family. As to quaternary structure, interacts with FtsZ via their C-terminal domains.

It is found in the cell inner membrane. Its function is as follows. Essential cell division protein that stabilizes the FtsZ protofilaments by cross-linking them and that serves as a cytoplasmic membrane anchor for the Z ring. Also required for the recruitment to the septal ring of downstream cell division proteins. This Shewanella sp. (strain MR-4) protein is Cell division protein ZipA.